A 310-amino-acid chain; its full sequence is Cytosolic Fe-S cluster assembly factor Nubp1 homolog (310 aa).

Residues Cys8, Cys22, Cys25, and Cys31 each contribute to the [4Fe-4S] cluster site. 62–69 (GKGGVGKS) contributes to the ATP binding site. Positions 239 and 242 each coordinate [4Fe-4S] cluster.

The protein belongs to the Mrp/NBP35 ATP-binding proteins family. NUBP1/NBP35 subfamily. As to quaternary structure, heterotetramer of 2 Nubp1 and 2 Nubp2 chains. It depends on [4Fe-4S] cluster as a cofactor.

It is found in the cytoplasm. In terms of biological role, component of the cytosolic iron-sulfur (Fe/S) protein assembly (CIA) machinery. Required for maturation of extramitochondrial Fe-S proteins. The Nubp1-Nubp2 heterotetramer forms a Fe-S scaffold complex, mediating the de novo assembly of an Fe-S cluster and its transfer to target apoproteins. The sequence is that of Cytosolic Fe-S cluster assembly factor Nubp1 homolog from Drosophila willistoni (Fruit fly).